The primary structure comprises 456 residues: Anthocyanidin 3-O-galactosyltransferase F3GT1 (456 aa).

An anthocyanidin contacts are provided by Ser-20, His-22, and Gln-83. Catalysis depends on His-22, which acts as the Proton acceptor. The active-site Charge relay is Asp-118. His-150 contributes to the an anthocyanidin binding site. Positions 281, 333, 334, 351, 355, 356, and 359 each coordinate UDP. Gly-374 is an an anthocyanidin binding site.

Belongs to the UDP-glycosyltransferase family. Expressed at low levels in stems and leaves. Expressed in ovaries.

The catalysed reaction is cyanidin + UDP-alpha-D-galactose = cyanidin 3-O-beta-D-galactoside + UDP + H(+). It participates in pigment biosynthesis; anthocyanin biosynthesis. Functionally, involved in anthocyanin biosynthesis by catalyzing the galactosylation of cyanidin. Required for the accumulation of anthocyanin in red-fleshed kiwifruit varieties. Seems to be the key enzyme regulating the accumulation of anthocyanin in red-fleshed kiwi fruits. The protein is Anthocyanidin 3-O-galactosyltransferase F3GT1 of Actinidia chinensis var. chinensis (Chinese soft-hair kiwi).